The chain runs to 249 residues: Ribitol 2-dehydrogenase (249 aa).

20 to 43 (TGAASGIGLECARTLLGAGAKVVL) serves as a coordination point for NAD(+). The active-site Proton acceptor is the Y160.

It belongs to the short-chain dehydrogenases/reductases (SDR) family. As to quaternary structure, homotetramer.

It catalyses the reaction ribitol + NAD(+) = D-ribulose + NADH + H(+). The polypeptide is Ribitol 2-dehydrogenase (rbtD) (Klebsiella aerogenes (Enterobacter aerogenes)).